The sequence spans 338 residues: 4-hydroxy-2-oxovalerate aldolase (338 aa).

One can recognise a Pyruvate carboxyltransferase domain in the interval 6–256 (IHIVDTTLRD…RTGVDFYKVM (251 aa)). 14 to 15 (RD) provides a ligand contact to substrate. Position 15 (aspartate 15) interacts with Mn(2+). Histidine 18 serves as the catalytic Proton acceptor. Substrate is bound by residues serine 168 and histidine 195. Mn(2+) contacts are provided by histidine 195 and histidine 197. Tyrosine 286 contributes to the substrate binding site.

The protein belongs to the 4-hydroxy-2-oxovalerate aldolase family.

It catalyses the reaction (S)-4-hydroxy-2-oxopentanoate = acetaldehyde + pyruvate. This Moorella thermoacetica (strain ATCC 39073 / JCM 9320) protein is 4-hydroxy-2-oxovalerate aldolase.